We begin with the raw amino-acid sequence, 224 residues long: Small ribosomal subunit protein uS3 (224 aa).

The KH type-2 domain occupies 38–106 (IRKFISKKLK…QVHINIVEIK (69 aa)).

This sequence belongs to the universal ribosomal protein uS3 family. As to quaternary structure, part of the 30S ribosomal subunit. Forms a tight complex with proteins S10 and S14.

Its function is as follows. Binds the lower part of the 30S subunit head. Binds mRNA in the 70S ribosome, positioning it for translation. This Lactobacillus helveticus (strain DPC 4571) protein is Small ribosomal subunit protein uS3.